The primary structure comprises 112 residues: Large ribosomal subunit protein bL17 (112 aa).

The protein belongs to the bacterial ribosomal protein bL17 family. In terms of assembly, part of the 50S ribosomal subunit. Contacts protein L32.

This is Large ribosomal subunit protein bL17 from Caldanaerobacter subterraneus subsp. tengcongensis (strain DSM 15242 / JCM 11007 / NBRC 100824 / MB4) (Thermoanaerobacter tengcongensis).